Consider the following 537-residue polypeptide: Cytochrome bd ubiquinol oxidase subunit 1 (537 aa).

Residues 1 to 24 (MISESVVDLSRLQFAMTALYHFLF) lie on the Cytoplasmic side of the membrane. His-21 contributes to the heme b binding site. The helical transmembrane segment at 25 to 44 (VPLTLGMTFLLAIMESVYVM) threads the bilayer. Topologically, residues 45 to 96 (TGKQVYKDMVKFWGKLFGINFALGVTTGITMEFQFGTNWAYYSHYVGDIFGA) are periplasmic. Residues 97-116 (PLAIEGLTAFFLESTFIGMF) form a helical membrane-spanning segment. At 117 to 131 (FFGWDRLSKIQHLAV) the chain is on the cytoplasmic side. A helical membrane pass occupies residues 132–151 (TWLVALGSNLSALWILVANG). Residues 152–189 (WMQHPVGAEFNFETMRMELVDFGALLLNPVAQVKFVHT) are Periplasmic-facing. His-188 provides a ligand contact to heme b. The chain crosses the membrane as a helical span at residues 190–209 (VASGYVTGAVFVLAISSYYL). Topologically, residues 210–221 (LKKRDLGFARRS) are cytoplasmic. A helical transmembrane segment spans residues 222-241 (FAIASAFGMASILSVIVLGD). Residues 242–394 (ESGYEVGEVQ…VASMFWSFRA (153 aa)) lie on the Periplasmic side of the membrane. Met-395 is a binding site for heme b. A helical transmembrane segment spans residues 395-414 (MVGAGFAMLILFVCAFWASA). Topologically, residues 415–472 (RKNEESKPWLLKFALYSLPLPWIATQTGWFVAEHGRQPWTIGGVLPTHLSASSLSTGD) are cytoplasmic. A helical membrane pass occupies residues 473–492 (LWGSLIALIAFYTLLLVVEM). Residues 493-537 (YLMIRFARLGPSSLHTGRYHFEQLEQHAVKHASPSQADPQQPVNA) are Periplasmic-facing.

This sequence belongs to the cytochrome ubiquinol oxidase subunit 1 family. As to quaternary structure, heterodimer of subunits I and II. Heme b serves as cofactor. Heme d cis-diol is required as a cofactor.

Its subcellular location is the cell inner membrane. The catalysed reaction is 2 a ubiquinol + O2(in) + 4 H(+)(in) = 2 a ubiquinone + 2 H2O(in) + 4 H(+)(out). Functionally, may be involved in maintaining the low intracellular oxygen concentration required for nitrogen fixation. The chain is Cytochrome bd ubiquinol oxidase subunit 1 (cydA) from Azotobacter vinelandii.